We begin with the raw amino-acid sequence, 269 residues long: Tryptophan synthase alpha chain (269 aa).

Catalysis depends on proton acceptor residues Glu-41 and Asp-52.

This sequence belongs to the TrpA family. Tetramer of two alpha and two beta chains.

The catalysed reaction is (1S,2R)-1-C-(indol-3-yl)glycerol 3-phosphate + L-serine = D-glyceraldehyde 3-phosphate + L-tryptophan + H2O. It participates in amino-acid biosynthesis; L-tryptophan biosynthesis; L-tryptophan from chorismate: step 5/5. In terms of biological role, the alpha subunit is responsible for the aldol cleavage of indoleglycerol phosphate to indole and glyceraldehyde 3-phosphate. This Geobacillus stearothermophilus (Bacillus stearothermophilus) protein is Tryptophan synthase alpha chain.